The primary structure comprises 55 residues: MPQLNPAPWFMIMLMTWFTYSLLIQPKLLSFTSMNTPSNKTTSTTKPTPWTWPWT.

Residues Pro-8 to Ile-24 traverse the membrane as a helical segment.

Belongs to the ATPase protein 8 family. In terms of assembly, component of the ATP synthase complex composed at least of ATP5F1A/subunit alpha, ATP5F1B/subunit beta, ATP5MC1/subunit c (homooctomer), MT-ATP6/subunit a, MT-ATP8/subunit 8, ATP5ME/subunit e, ATP5MF/subunit f, ATP5MG/subunit g, ATP5MK/subunit k, ATP5MJ/subunit j, ATP5F1C/subunit gamma, ATP5F1D/subunit delta, ATP5F1E/subunit epsilon, ATP5PF/subunit F6, ATP5PB/subunit b, ATP5PD/subunit d, ATP5PO/subunit OSCP. ATP synthase complex consists of a soluble F(1) head domain (subunits alpha(3) and beta(3)) - the catalytic core - and a membrane F(0) domain - the membrane proton channel (subunits c, a, 8, e, f, g, k and j). These two domains are linked by a central stalk (subunits gamma, delta, and epsilon) rotating inside the F1 region and a stationary peripheral stalk (subunits F6, b, d, and OSCP).

Its subcellular location is the mitochondrion membrane. Functionally, subunit 8, of the mitochondrial membrane ATP synthase complex (F(1)F(0) ATP synthase or Complex V) that produces ATP from ADP in the presence of a proton gradient across the membrane which is generated by electron transport complexes of the respiratory chain. ATP synthase complex consist of a soluble F(1) head domain - the catalytic core - and a membrane F(1) domain - the membrane proton channel. These two domains are linked by a central stalk rotating inside the F(1) region and a stationary peripheral stalk. During catalysis, ATP synthesis in the catalytic domain of F(1) is coupled via a rotary mechanism of the central stalk subunits to proton translocation. In vivo, can only synthesize ATP although its ATP hydrolase activity can be activated artificially in vitro. Part of the complex F(0) domain. The sequence is that of ATP synthase F(0) complex subunit 8 from Coturnix japonica (Japanese quail).